Here is a 320-residue protein sequence, read N- to C-terminus: ATP-dependent 6-phosphofructokinase isozyme 1 (320 aa).

ATP is bound at residue glycine 12. ADP-binding positions include 22 to 26 and 55 to 60; these read RGVVR and RYSVSD. Residues 73-74 and 103-106 contribute to the ATP site; these read RF and GDGS. A Mg(2+)-binding site is contributed by aspartate 104. 126–128 contributes to the substrate binding site; that stretch reads TID. Catalysis depends on aspartate 128, which acts as the Proton acceptor. Arginine 155 provides a ligand contact to ADP. Residues arginine 163 and 170–172 each bind substrate; that span reads MGR. Residues 186–188, lysine 212, and 214–216 each bind ADP; these read GCE and KKH. Substrate contacts are provided by residues glutamate 223, arginine 244, and 250–253; that span reads HIQR.

This sequence belongs to the phosphofructokinase type A (PFKA) family. ATP-dependent PFK group I subfamily. Prokaryotic clade 'B1' sub-subfamily. Homotetramer. Mg(2+) is required as a cofactor.

It localises to the cytoplasm. The enzyme catalyses beta-D-fructose 6-phosphate + ATP = beta-D-fructose 1,6-bisphosphate + ADP + H(+). It participates in carbohydrate degradation; glycolysis; D-glyceraldehyde 3-phosphate and glycerone phosphate from D-glucose: step 3/4. Its activity is regulated as follows. Allosterically activated by ADP and other diphosphonucleosides, and allosterically inhibited by phosphoenolpyruvate. Its function is as follows. Catalyzes the phosphorylation of D-fructose 6-phosphate to fructose 1,6-bisphosphate by ATP, the first committing step of glycolysis. The polypeptide is ATP-dependent 6-phosphofructokinase isozyme 1 (Escherichia coli O6:H1 (strain CFT073 / ATCC 700928 / UPEC)).